Consider the following 138-residue polypeptide: Small ribosomal subunit protein uS11c (138 aa).

The tract at residues Met1–Val22 is disordered.

It belongs to the universal ribosomal protein uS11 family. Part of the 30S ribosomal subunit.

The protein resides in the plastid. In Cuscuta reflexa (Southern Asian dodder), this protein is Small ribosomal subunit protein uS11c.